The chain runs to 4351 residues: Protocadherin Fat 2 (4351 aa).

Residues 1-18 form the signal peptide; it reads MTLVLLGLAILLLHRAAC. At 19 to 4050 the chain is on the extracellular side; sequence EKSLEETIPP…IKRGDWGQQE (4032 aa). 2 Cadherin domains span residues 34–148 and 149–256; these read THSL…KPLF and SPPS…PPAI. Residues N39, N210, N280, and N330 are each glycosylated (N-linked (GlcNAc...) asparagine). Cadherin domains follow at residues 363–458, 459–564, 565–669, 716–820, 821–925, 926–1032, 1033–1142, 1138–1242, 1243–1346, 1350–1448, 1449–1555, 1556–1660, 1661–1758, 1759–1872, 1873–1968, 1969–2070, 2071–2171, 2172–2272, 2273–2379, 2380–2481, 2482–2585, 2586–2692, 2693–2799, 2800–2908, 2909–3013, 3014–3115, 3116–3220, 3221–3323, 3324–3428, 3429–3533, and 3534–3631; these read EKAV…APVF, NRSS…QPMF, EEVN…VPVQ, DHFP…PPRF, PPGG…PPQC, ITEH…SPHF, SSFV…RPVF, SRPV…PPMF, SHKL…SSIP, DESY…RPQF, LQDH…SPHF, TQLR…APVF, SKDE…PPAF, GKPT…PPRF, SEQI…SLQF, DQDV…IPEF, QHLP…NPLF, QSPY…PPTF, SQLV…PPKF, REPQ…SPEF, QQNV…APQF, KASG…LPKF, SEPL…RPVF, EADP…PPRF, ASED…SPQC, SQLL…APRF, FPSH…LPIF, LNAE…HPRF, THDL…PPRF, FQLN…PPST, and LPLE…VPQQ. N-linked (GlcNAc...) asparagine glycans are attached at residues N459, N568, N627, and N789. An N-linked (GlcNAc...) asparagine glycan is attached at N996. Residues N1175, N1276, and N1417 are each glycosylated (N-linked (GlcNAc...) asparagine). Residues N1899, N1998, N2007, N2102, N2165, N2183, N2325, N2368, N2387, N2430, N2470, N2547, and N2597 are each glycosylated (N-linked (GlcNAc...) asparagine). Residues N3127, N3278, and N3312 are each glycosylated (N-linked (GlcNAc...) asparagine). N3432, N3603, N3770, N3774, N3815, N3842, N3875, and N3906 each carry an N-linked (GlcNAc...) asparagine glycan. Residues 3775–3946 form the Laminin G-like domain; the sequence is GTTLRFSGQS…RLETWALSQC (172 aa). Cystine bridges form between C3914-C3946, C3953-C3964, C3958-C3974, and C3976-C3985. EGF-like domains follow at residues 3949–3986 and 3988–4024; these read PGTA…RNCE and GREN…DRCE. The N-linked (GlcNAc...) asparagine glycan is linked to N3991. 3 cysteine pairs are disulfide-bonded: C3992–C4003, C3997–C4012, and C4014–C4023. The chain crosses the membrane as a helical span at residues 4051-4071; that stretch reads FLVITVALPLVIIATVGLLLY. Residues 4072 to 4351 are Cytoplasmic-facing; it reads CRRRKSHKPV…DYGSCEEVMF (280 aa). A disordered region spans residues 4316 to 4340; sequence VNGGPATGRSQPRAPPNYEGSDMVE.

In terms of assembly, homodimer. Cerebellum-specific expression. Expressed in thin parallel fibers of cerebellar granule cells.

The protein localises to the cell membrane. Its subcellular location is the cell junction. The protein resides in the golgi apparatus. It localises to the trans-Golgi network. Functionally, involved in the regulation of cell migration. May be involved in mediating the organization of the parallel fibers of granule cells during cerebellar development. This is Protocadherin Fat 2 (Fat2) from Rattus norvegicus (Rat).